Consider the following 643-residue polypeptide: Alpha-dioxygenase PIOX (643 aa).

The active-site Proton acceptor is histidine 167. Aspartate 168 is a Ca(2+) binding site. Residue histidine 172 participates in heme b binding. Ca(2+) is bound by residues threonine 220, tryptophan 222, aspartate 224, and serine 226. Histidine 392, arginine 489, and arginine 493 together coordinate heme b.

It belongs to the peroxidase family. The cofactor is heme b. Requires Ca(2+) as cofactor.

The enzyme catalyses a 1,2-saturated fatty acid + O2 = a (2R)-2-hydroperoxy fatty acid. It catalyses the reaction (9Z,12Z,15Z)-octadecatrienoate + O2 = (R)-2-hydroperoxy-(9Z,12Z,15Z)-octadecatrienoate. It carries out the reaction (9Z,12Z)-octadecadienoate + O2 = (2R,9Z,12Z)-2-hydroperoxyoctadecadienoate. Alpha-dioxygenase that catalyzes the primary oxygenation step of a variety of 14-20 carbon fatty acids, containing up to three unsaturated bonds, into their corresponding 2R-hydroperoxides. Involved in the production of oxylipins that function in cell signaling, wound healing, and protection from infection. The chain is Alpha-dioxygenase PIOX from Nicotiana tabacum (Common tobacco).